The primary structure comprises 235 residues: MGNKVNPIGMRLQVNRTWDSRWYADTKDYGDLLLEDLAIRDFIKKECHQAGVARVIIERPHKKCRVTIHTARPGVIIGKKGADIEGLRQKIAKMTASELHLNIVEVRKPELDAALVGESIAQQLERRVSFRRAMKRAVQNAMRMGALGIRVNVAGRLGGAEIARTEWYREGRVPLHTLRADIDYAHVEAATAYGIIGIKTWIFKGEIMEHDPAARDRKAQELQDGPAPRGAGGRR.

The region spanning 39-107 is the KH type-2 domain; the sequence is IRDFIKKECH…ELHLNIVEVR (69 aa). The interval 213–235 is disordered; that stretch reads AARDRKAQELQDGPAPRGAGGRR.

This sequence belongs to the universal ribosomal protein uS3 family. Part of the 30S ribosomal subunit. Forms a tight complex with proteins S10 and S14.

In terms of biological role, binds the lower part of the 30S subunit head. Binds mRNA in the 70S ribosome, positioning it for translation. This chain is Small ribosomal subunit protein uS3, found in Roseobacter denitrificans (strain ATCC 33942 / OCh 114) (Erythrobacter sp. (strain OCh 114)).